The sequence spans 135 residues: Cilia- and flagella-associated protein 144 (135 aa).

The segment at 76-100 (QGPKKKYSETQTEAQEIGWDPNPLI) is disordered.

Belongs to the CFAP144 family. As to quaternary structure, microtubule inner protein component of sperm flagellar doublet microtubules. Predominantly expressed in tissues containing motile cilia.

The protein resides in the cytoplasm. Its subcellular location is the cytoskeleton. The protein localises to the cilium axoneme. It localises to the flagellum axoneme. This is Cilia- and flagella-associated protein 144 from Mus musculus (Mouse).